Here is a 267-residue protein sequence, read N- to C-terminus: Indole-3-glycerol phosphate synthase (267 aa).

Belongs to the TrpC family.

It catalyses the reaction 1-(2-carboxyphenylamino)-1-deoxy-D-ribulose 5-phosphate + H(+) = (1S,2R)-1-C-(indol-3-yl)glycerol 3-phosphate + CO2 + H2O. It participates in amino-acid biosynthesis; L-tryptophan biosynthesis; L-tryptophan from chorismate: step 4/5. This is Indole-3-glycerol phosphate synthase from Cupriavidus taiwanensis (strain DSM 17343 / BCRC 17206 / CCUG 44338 / CIP 107171 / LMG 19424 / R1) (Ralstonia taiwanensis (strain LMG 19424)).